The following is an 89-amino-acid chain: Small ribosomal subunit protein uS15 (89 aa).

It belongs to the universal ribosomal protein uS15 family. As to quaternary structure, part of the 30S ribosomal subunit. Forms a bridge to the 50S subunit in the 70S ribosome, contacting the 23S rRNA.

Functionally, one of the primary rRNA binding proteins, it binds directly to 16S rRNA where it helps nucleate assembly of the platform of the 30S subunit by binding and bridging several RNA helices of the 16S rRNA. Its function is as follows. Forms an intersubunit bridge (bridge B4) with the 23S rRNA of the 50S subunit in the ribosome. The protein is Small ribosomal subunit protein uS15 of Mycolicibacterium vanbaalenii (strain DSM 7251 / JCM 13017 / BCRC 16820 / KCTC 9966 / NRRL B-24157 / PYR-1) (Mycobacterium vanbaalenii).